We begin with the raw amino-acid sequence, 130 residues long: Fluoride-specific ion channel FluC (130 aa).

Helical transmembrane passes span Phe3–Gly23, Gly39–Val59, Phe67–Leu87, and Val102–Leu122. Residues Gly77 and Thr80 each contribute to the Na(+) site.

Belongs to the fluoride channel Fluc/FEX (TC 1.A.43) family.

The protein localises to the cell inner membrane. The enzyme catalyses fluoride(in) = fluoride(out). With respect to regulation, na(+) is not transported, but it plays an essential structural role and its presence is essential for fluoride channel function. Its function is as follows. Fluoride-specific ion channel. Important for reducing fluoride concentration in the cell, thus reducing its toxicity. The sequence is that of Fluoride-specific ion channel FluC from Helicobacter pylori (strain Shi470).